The following is a 312-amino-acid chain: Malate dehydrogenase (312 aa).

Residues 12–17 (GAGFTG) and Asp-36 contribute to the NAD(+) site. Substrate is bound by residues Arg-87 and Arg-93. NAD(+) is bound by residues Asn-100 and 123-125 (LTN). Asn-125 provides a ligand contact to substrate. Ser-149 bears the Phosphoserine mark. Arg-156 lines the substrate pocket. His-180 serves as the catalytic Proton acceptor.

This sequence belongs to the LDH/MDH superfamily. MDH type 3 family.

The catalysed reaction is (S)-malate + NAD(+) = oxaloacetate + NADH + H(+). Functionally, catalyzes the reversible oxidation of malate to oxaloacetate. This is Malate dehydrogenase from Geobacillus thermodenitrificans (strain NG80-2).